The following is a 154-amino-acid chain: Insulin-like peptide 1 (154 aa).

An N-terminal signal peptide occupies residues 1–29 (MFSQHNGAAVHGLRLQSLLIAAMLTAAMA). Intrachain disulfides connect Cys49–Cys138, Cys61–Cys151, and Cys137–Cys142. The tract at residues 72–92 (RESLLGNSDDDEDTEQEVQDD) is disordered. A propeptide spans 73–122 (ESLLGNSDDDEDTEQEVQDDSSMWQTLDGAGYSFSPLLTNLYGSEVLIKM) (connecting peptide). The segment covering 79–91 (SDDDEDTEQEVQD) has biased composition (acidic residues).

Belongs to the insulin family. As to quaternary structure, heterodimer of a B chain and an A chain linked by two disulfide bonds.

The protein resides in the secreted. In terms of biological role, possible ligand of InR/insulin-like receptor. This chain is Insulin-like peptide 1, found in Drosophila melanogaster (Fruit fly).